Consider the following 582-residue polypeptide: DBIRD complex subunit ZNF326 (582 aa).

A mediates transcriptional activation region spans residues 1–124 (MDFEDDYTHS…YRNSLDSFGG (124 aa)). 12 positions are modified to phosphoserine: Ser-48, Ser-56, Ser-63, Ser-69, Ser-81, Ser-82, Ser-91, Ser-106, Ser-114, Ser-118, Ser-121, and Ser-137. Lys-140 participates in a covalent cross-link: Glycyl lysine isopeptide (Lys-Gly) (interchain with G-Cter in SUMO2). Positions 154–194 (YSSYSSFSSPHMKPAPVGSRGRGTPAYPESTFGSRNYDAFG) are disordered. Arg-173 carries the post-translational modification Omega-N-methylarginine. A Phosphoserine modification is found at Ser-212. Omega-N-methylarginine is present on Arg-235. A Bipartite nuclear localization signal motif is present at residues 238 to 260 (KRKMMQPFNKPSGTFIKKPKLAK). Residue Lys-240 forms a Glycyl lysine isopeptide (Lys-Gly) (interchain with G-Cter in SUMO2) linkage. A disordered region spans residues 243–302 (QPFNKPSGTFIKKPKLAKPMEKISLSKSPTKTDPKNEEEEKRRIEARREKQRRRREKNSE). Lys-247 is modified (N6-acetyllysine; alternate). A Glycyl lysine isopeptide (Lys-Gly) (interchain with G-Cter in SUMO2); alternate cross-link involves residue Lys-247. Ser-249 is modified (phosphoserine). Residue Thr-251 is modified to Phosphothreonine. Residues Lys-254 and Lys-264 each participate in a glycyl lysine isopeptide (Lys-Gly) (interchain with G-Cter in SUMO2) cross-link. Phosphoserine is present on Ser-270. The span at 272–290 (TKTDPKNEEEEKRRIEARR) shows a compositional bias: basic and acidic residues. The C2H2 AKAP95-type 1 zinc finger occupies 314 to 336 (CSFCKFRTFEEKDIELHLESSSH). Lys-401 participates in a covalent cross-link: Glycyl lysine isopeptide (Lys-Gly) (interchain with G-Cter in SUMO2). A C2H2 AKAP95-type 2 zinc finger spans residues 407–430 (CSACSVYIPALHSSVQQHLKSPDH). Residues Lys-459 and Lys-467 each participate in a glycyl lysine isopeptide (Lys-Gly) (interchain with G-Cter in SUMO2) cross-link. The tract at residues 472–582 (FEIQDHSQDQ…DFPVEQPEEN (111 aa)) is disordered. Residues 483-523 (IEGDEEDEEKIDEPIEEEEDEDEEEEAEEVGEVEEVEEVEE) are compositionally biased toward acidic residues. Over residues 530 to 545 (EGEGNIQGVGEGGEVG) the composition is skewed to gly residues. Over residues 552 to 567 (GVGEVEEVEELEEETA) the composition is skewed to acidic residues.

This sequence belongs to the AKAP95 family. In terms of assembly, component of the DBIRD complex. Interacts with CCAR2; the interaction is direct.

It localises to the nucleus matrix. Its function is as follows. Core component of the DBIRD complex, a multiprotein complex that acts at the interface between core mRNP particles and RNA polymerase II (RNAPII) and integrates transcript elongation with the regulation of alternative splicing: the DBIRD complex affects local transcript elongation rates and alternative splicing of a large set of exons embedded in (A + T)-rich DNA regions. May play a role in neuronal differentiation and is able to bind DNA and activate expression in vitro. The chain is DBIRD complex subunit ZNF326 (ZNF326) from Homo sapiens (Human).